The following is a 280-amino-acid chain: Tryptophan synthase alpha chain (280 aa).

Residues Glu50 and Asp61 each act as proton acceptor in the active site.

The protein belongs to the TrpA family. Tetramer of two alpha and two beta chains.

The enzyme catalyses (1S,2R)-1-C-(indol-3-yl)glycerol 3-phosphate + L-serine = D-glyceraldehyde 3-phosphate + L-tryptophan + H2O. Its pathway is amino-acid biosynthesis; L-tryptophan biosynthesis; L-tryptophan from chorismate: step 5/5. Functionally, the alpha subunit is responsible for the aldol cleavage of indoleglycerol phosphate to indole and glyceraldehyde 3-phosphate. This is Tryptophan synthase alpha chain from Methylorubrum extorquens (strain PA1) (Methylobacterium extorquens).